The following is a 283-amino-acid chain: 5'-nucleotidase SurE (283 aa).

The a divalent metal cation site is built by aspartate 14, aspartate 15, serine 47, and asparagine 105.

Belongs to the SurE nucleotidase family. A divalent metal cation is required as a cofactor.

Its subcellular location is the cytoplasm. The enzyme catalyses a ribonucleoside 5'-phosphate + H2O = a ribonucleoside + phosphate. Its function is as follows. Nucleotidase that shows phosphatase activity on nucleoside 5'-monophosphates. The polypeptide is 5'-nucleotidase SurE (Chlamydia trachomatis serovar L2 (strain ATCC VR-902B / DSM 19102 / 434/Bu)).